Consider the following 125-residue polypeptide: Fluoride-specific ion channel FluC (125 aa).

4 helical membrane passes run 3–23 (FILI…VSKV), 33–53 (IPLG…FVLF), 65–85 (FVLF…TFAY), and 99–119 (LVYF…GMVL). Na(+)-binding residues include Gly75 and Thr78.

The protein belongs to the fluoride channel Fluc/FEX (TC 1.A.43) family.

It localises to the cell inner membrane. The enzyme catalyses fluoride(in) = fluoride(out). With respect to regulation, na(+) is not transported, but it plays an essential structural role and its presence is essential for fluoride channel function. Its function is as follows. Fluoride-specific ion channel. Important for reducing fluoride concentration in the cell, thus reducing its toxicity. The sequence is that of Fluoride-specific ion channel FluC from Thermosipho melanesiensis (strain DSM 12029 / CIP 104789 / BI429).